A 2329-amino-acid polypeptide reads, in one-letter code: Genome polyprotein (2329 aa).

Positions 29–182 (MEFTLHNGEK…DPSDVLVFVP (154 aa)) constitute a Peptidase C28 domain. Residues Cys51, His148, and Asp163 each act as for leader protease activity in the active site. Disordered regions lie at residues 197 to 218 (QKRL…QSGN) and 238 to 264 (QLGD…NNTQ). Gly202 is lipidated: N-myristoyl glycine; by host. Polar residues-rich tracts occupy residues 204 to 218 (GQSS…QSGN) and 238 to 251 (QLGD…SNEG). Residues 252–264 (STDTTSTHTNNTQ) show a composition bias toward low complexity. Residues 787 to 795 (ALLRSATYY) are antigenic epitope. The short motif at 866 to 868 (RGD) is the Cell attachment site element. The 165-residue stretch at 1186-1350 (NVHIANLCKV…DGYKINNKLD (165 aa)) folds into the SF3 helicase domain. 1214–1221 (GKSGQGKS) contacts ATP. The stretch at 1478–1498 (KENFEIVALCLTLLANIVIMI) is an intramembrane region. 2 stretches are compositionally biased toward basic and acidic residues: residues 1526-1535 (KTLDEAEKNP) and 1546-1558 (FRER…KTSD). Residues 1526–1577 (KTLDEAEKNPLETSGASTVGFRERTLPGRKTSDDVNSEPVKSVEEQPQAEGP) form a disordered region. O-(5'-phospho-RNA)-tyrosine occurs at positions 1578, 1601, and 1625. One can recognise a Peptidase C3 domain in the interval 1649–1845 (APPTDLQKMV…YCSCVSRSML (197 aa)). Catalysis depends on His1692, which acts as the For protease 3C activity; Proton donor/acceptor. Residues Asp1730 and Cys1809 each act as for protease 3C activity in the active site. 2 short sequence motifs (nuclear localization signal) span residues 1875 to 1883 (MRKTKLAPT) and 1876 to 1883 (RKTKLAPT). The region spanning 2093–2211 (RNVWDVDYSA…ASDYDLDFEA (119 aa)) is the RdRp catalytic domain. Asp2197 acts as the For RdRp activity in catalysis.

It belongs to the picornaviruses polyprotein family. Interacts with host ISG15. In terms of assembly, interacts (via R-G-D motif) with host ITGAV/ITGB6. Interacts with host MAVS; this interaction inhibits binding of host TRAF3 to MAVS, thereby suppressing interferon-mediated responses. As to quaternary structure, forms homooligomers. Homohexamer. Interacts with host VIM. Interacts with host BECN1. In terms of assembly, interacts with host DCTN3. As to quaternary structure, interacts with RNA-dependent RNA polymerase; this interaction allows 3B-1 to binds 2 polymerases and act as a primer. It also allows the recruitment of the RNA-dependent RNA polymerase to host membranes. Interacts with RNA-dependent RNA polymerase; this interaction allows 3B-2 to act as a primer. In terms of assembly, interacts with RNA-dependent RNA polymerase; this interaction allows 3B-3 to act as a primer. As to quaternary structure, interacts with 3B-1; this interaction allows 3B-1 to binds 2 polymerases and act as a primer. It also allows the recruitment of the RNA-dependent RNA polymerase to host membranes. Interacts with 3B-2; this interaction allows 3B-2 to act as a primer. Interacts with 3B-3; this interaction allows 3B-3 to act as a primer. Specific enzymatic cleavages in vivo by the viral proteases yield a variety of precursors and mature proteins. The polyprotein seems to be cotranslationally cleaved at the 2A/2B junction by a ribosomal skip from one codon to the next without formation of a peptide bond. This process would release the L-P1-2A peptide from the translational complex. Post-translationally, during virion maturation, immature virions are rendered infectious following cleavage of VP0 into VP4 and VP2. This maturation seems to be an autocatalytic event triggered by the presence of RNA in the capsid and is followed by a conformational change of the particle. In terms of processing, myristoylation is required during RNA encapsidation and formation of the mature virus particle. Uridylylated by the polymerase and covalently linked to the 5'-end of genomic RNA. These uridylylated forms act as a nucleotide-peptide primer for the polymerase.

The protein localises to the host nucleus. It is found in the host cytoplasm. The protein resides in the virion. It localises to the host endoplasmic reticulum membrane. Its subcellular location is the host cytoplasmic vesicle membrane. It catalyses the reaction Autocatalytically cleaves itself from the polyprotein of the foot-and-mouth disease virus by hydrolysis of a Lys-|-Gly bond, but then cleaves host cell initiation factor eIF-4G at bonds -Gly-|-Arg- and -Lys-|-Arg-.. It carries out the reaction a ribonucleoside 5'-triphosphate + H2O = a ribonucleoside 5'-diphosphate + phosphate + H(+). The enzyme catalyses RNA(n) + a ribonucleoside 5'-triphosphate = RNA(n+1) + diphosphate. The catalysed reaction is Selective cleavage of Gln-|-Gly bond in the poliovirus polyprotein. In other picornavirus reactions Glu may be substituted for Gln, and Ser or Thr for Gly.. Autocatalytically cleaves itself from the polyprotein at the L/VP0 junction. Also cleaves the host translation initiation factors EIF4G1 and EIF4G3, in order to shut off the capped cellular mRNA transcription. Plays a role in counteracting host innate antiviral response using diverse mechanisms. Possesses a deubiquitinase activity acting on both 'Lys-48' and 'Lys-63'-linked polyubiquitin chains. In turn, inhibits the ubiquitination and subsequent activation of key signaling molecules of type I IFN response such as host RIGI, TBK1, TRAF3 and TRAF6. Inhibits host NF-kappa-B activity by inducing a decrease in RELA mRNA levels. Cleaves a peptide bond in the C-terminus of host ISG15, resulting in the damaging of this modifier that can no longer be attached to target proteins. Also cleaves host G3BP1 and G3BP2 in order to inhibit cytoplasmic stress granules assembly. Functionally, lies on the inner surface of the capsid shell. After binding to the host receptor, the capsid undergoes conformational changes. Capsid protein VP4 is released, capsid protein VP1 N-terminus is externalized, and together, they shape a pore in the host membrane through which the viral genome is translocated into the host cell cytoplasm. After genome has been released, the channel shrinks. In terms of biological role, forms an icosahedral capsid of pseudo T=3 symmetry with capsid proteins VP1 and VP3. The capsid is composed of 60 copies of each capsid protein organized in the form of twelve pentamers and encloses the viral positive strand RNA genome. Upon acidifcation in the endosome, dissociates into pentamers. Its function is as follows. Forms an icosahedral capsid of pseudo T=3 symmetry with capsid proteins VP0 and VP3. The capsid is composed of 60 copies of each capsid protein organized in the form of twelve pentamers and encloses the viral positive strand RNA genome. Upon acidifcation in the endosome, dissociates into pentamers. Forms an icosahedral capsid of pseudo T=3 symmetry with capsid proteins VP2 and VP3. The capsid is composed of 60 copies of each capsid protein organized in the form of twelve pentamers and encloses the viral positive strand RNA genome. Mediates cell entry by attachment to an integrin receptor, usually host ITGAV/ITGB6. In addition, targets host MAVS to suppress type I IFN pathway. Upon acidifcation in the endosome, dissociates into pentamers. Functionally, mediates self-processing of the polyprotein by a translational effect termed 'ribosome skipping'. Mechanistically, 2A-mediated cleavage occurs between the C-terminal glycine and the proline of the downstream protein 2B. In the case of foot-and-mouth disease virus, the 2A oligopeptide is post-translationally 'trimmed' from the C-terminus of the upstream protein 1D by 3C proteinase. In terms of biological role, plays an essential role in the virus replication cycle by acting as a viroporin. Creates a pore in the host endoplasmic reticulum and as a consequence releases Ca2+ in the cytoplasm of infected cell. In turn, high levels of cytoplasmic calcium may trigger membrane trafficking and transport of viral ER-associated proteins to viroplasms, sites of viral genome replication. Its function is as follows. Associates with and induces structural rearrangements of intracellular membranes. Triggers host autophagy by interacting with host BECN1 and thereby promotes viral replication. Participates in viral replication and interacts with host DHX9. Displays RNA-binding, nucleotide binding and NTPase activities. May play a role in virion morphogenesis and viral RNA encapsidation by interacting with the capsid protein VP3. Plays important roles in virus replication, virulence and host range. Cooperates with host DDX56 to inhibit IRF3 nuclear translocation and subsequent type I interferon production. Functionally, covalently linked to the 5'-end of both the positive-strand and negative-strand genomic RNAs. Acts as a genome-linked replication primer. In terms of biological role, cysteine protease that generates mature viral proteins from the precursor polyprotein. In addition to its proteolytic activity, binds to viral RNA and thus influences viral genome replication. RNA and substrate bind cooperatively to the protease. Its function is as follows. RNA-directed RNA polymerase 3D-POL replicates genomic and antigenomic RNA by recognizing replications specific signals. Covalently attaches UMP to a tyrosine of VPg, which is used to prime RNA synthesis. The positive stranded RNA genome is first replicated at virus induced membranous vesicles, creating a dsRNA genomic replication form. This dsRNA is then used as template to synthesize positive stranded RNA genomes. ss(+)RNA genomes are either translated, replicated or encapsidated. This is Genome polyprotein from Foot-and-mouth disease virus serotype Asia-1 (FMDV).